Consider the following 242-residue polypeptide: Beta-carotene ketolase (242 aa).

The catalysed reaction is all-trans-beta-carotene + 2 AH2 + 2 O2 = echinenone + 2 A + 3 H2O. It carries out the reaction echinenone + 2 AH2 + 2 O2 = canthaxanthin + 2 A + 3 H2O. The protein operates within carotenoid biosynthesis; astaxanthin biosynthesis. Converts beta-carotene to canthaxanthin via echinenone. This is Beta-carotene ketolase from Paracoccus sp. (strain PC1) (Alcaligenes sp. (strain PC1)).